We begin with the raw amino-acid sequence, 358 residues long: uncharacterized protein (358 aa).

Residues Arg70–Arg88 show a composition bias toward low complexity. The interval Arg70–Ala93 is disordered. The Macro domain maps to Pro178–Glu353.

This is an uncharacterized protein from Mycobacterium bovis (strain ATCC BAA-935 / AF2122/97).